A 180-amino-acid polypeptide reads, in one-letter code: uncharacterized protein (180 aa).

The N-acetyltransferase domain occupies 45–180 (FVFSQVRTLD…GNRCAFWYAN (136 aa)).

This sequence belongs to the acetyltransferase family. Ycf52 subfamily.

This is an uncharacterized protein from Prochlorococcus marinus (strain SARG / CCMP1375 / SS120).